Consider the following 173-residue polypeptide: Shikimate kinase (173 aa).

Residue 14-19 coordinates ATP; the sequence is GAGKST. Position 18 (serine 18) interacts with Mg(2+). Positions 36, 60, and 82 each coordinate substrate. Arginine 120 contacts ATP. Arginine 140 contributes to the substrate binding site. Glutamine 157 is a binding site for ATP.

It belongs to the shikimate kinase family. In terms of assembly, monomer. Mg(2+) is required as a cofactor.

The protein resides in the cytoplasm. The enzyme catalyses shikimate + ATP = 3-phosphoshikimate + ADP + H(+). It participates in metabolic intermediate biosynthesis; chorismate biosynthesis; chorismate from D-erythrose 4-phosphate and phosphoenolpyruvate: step 5/7. Its function is as follows. Catalyzes the specific phosphorylation of the 3-hydroxyl group of shikimic acid using ATP as a cosubstrate. The chain is Shikimate kinase from Baumannia cicadellinicola subsp. Homalodisca coagulata.